Here is a 185-residue protein sequence, read N- to C-terminus: Ribosome-recycling factor (185 aa).

The protein belongs to the RRF family.

It localises to the cytoplasm. Responsible for the release of ribosomes from messenger RNA at the termination of protein biosynthesis. May increase the efficiency of translation by recycling ribosomes from one round of translation to another. This Pseudomonas aeruginosa (strain LESB58) protein is Ribosome-recycling factor.